A 488-amino-acid polypeptide reads, in one-letter code: Gamma-aminobutyric acid receptor subunit beta-4 (488 aa).

Residues 1-25 (MWTFQADRLSGIVSALAALCVACCA) form the signal peptide. The Extracellular segment spans residues 26–244 (QSPSTGNISV…SFRIKRNIGY (219 aa)). Asn32, Asn104, Asn173, and Asn195 each carry an N-linked (GlcNAc...) asparagine glycan. A disulfide bridge connects residues Cys160 and Cys174. Helical transmembrane passes span 245–266 (FILQ…SFWI), 271–292 (SAAR…NTHL), and 304–326 (AIDV…YAFV). The Cytoplasmic segment spans residues 327 to 465 (NYIFFGRGPR…DLTDVSTIDK (139 aa)). The chain crosses the membrane as a helical span at residues 466 to 487 (WSRIIFPITFGFFNLVYWLYYV).

Belongs to the ligand-gated ion channel (TC 1.A.9) family. Gamma-aminobutyric acid receptor (TC 1.A.9.5) subfamily. GABRB4 sub-subfamily. Generally pentameric. There are five types of GABA(A) receptor chains: alpha, beta, gamma, delta, and rho.

The protein localises to the postsynaptic cell membrane. The protein resides in the cell membrane. Its function is as follows. GABA, the major inhibitory neurotransmitter in the vertebrate brain, mediates neuronal inhibition by binding to the GABA/benzodiazepine receptor and opening an integral chloride channel. This chain is Gamma-aminobutyric acid receptor subunit beta-4 (GABRB4), found in Gallus gallus (Chicken).